Reading from the N-terminus, the 338-residue chain is Nucleoid-associated protein VSAL_I1059 (338 aa).

The interval 319–338 is disordered; it reads KGTPPNLKDQLTRRLGSSES.

Belongs to the YejK family.

It is found in the cytoplasm. It localises to the nucleoid. The polypeptide is Nucleoid-associated protein VSAL_I1059 (Aliivibrio salmonicida (strain LFI1238) (Vibrio salmonicida (strain LFI1238))).